Consider the following 309-residue polypeptide: Partitioning defective protein 6 (309 aa).

The region spanning 14-96 (TLQVKSKFDS…PLLRLLIQRR (83 aa)) is the PB1 domain. The region spanning 132–149 (ISNPEDFRQVSAIIDVDI) is the Pseudo-CRIB domain. Residues 156 to 249 (RVRLCKHGQE…NLIITVKPAN (94 aa)) form the PDZ domain. Residues 249 to 270 (NQRNTLSRGPSQQGTPNASEMS) show a composition bias toward polar residues. The segment at 249-309 (NQRNTLSRGP…DANDSDSGED (61 aa)) is disordered.

The protein belongs to the PAR6 family. As to quaternary structure, interacts with par-3, required for its peripheral localization, and with cdc-42, required for the activation of a par-3/par-6/pkc-3 complex. In terms of tissue distribution, colocalized with par-3 at all stages in early embryos, at the anterior cortex of the embryo. Patchy expression observed at the periphery after completion of meiosis I and in meiosis II, which on completion of metaphase II, is restricted to the anterior 85% of embryo length; this decreases to 55% in embryos between prophase and telophase of the first mitosis. During the first cleavage, expression is detected in the advancing furrow. Along with pkc-3, is unable to associate with the apical cortex of cells that lack par-3. Transiently coexpressed and colocalized with par-3 and pkc-3, asymmetrically in the developing somatic gonad, including the spermathecal precursor cells of L4 larvae.

It is found in the cytoplasm. Its subcellular location is the cell membrane. The protein resides in the cell junction. It localises to the tight junction. Necessary for apicobasal and anterior-posterior asymmetries associated with cell adhesion and gastrulation during the first few cell cycles of embryogenesis. Required for localizing/ maintaining par-3 at the cell periphery. Regulates mes-1 expression and/or localization pattern during early embryogenesis. Acts together with par-3 and pkc-3 in maintaining epithelial cell polarity in the distal spermatheca. Plays a role in endosome and Golgi body positioning. This chain is Partitioning defective protein 6, found in Caenorhabditis elegans.